The sequence spans 468 residues: Keratin, type I cytoskeletal 26 (468 aa).

The tract at residues Met1–Asn82 is head. Residues Glu83–Trp118 are coil 1A. The region spanning Glu83–Ser398 is the IF rod domain. The tract at residues Tyr119 to Val140 is linker 1. Residues Ile141–Leu232 form a coil 1B region. The segment at Gln233–Leu255 is linker 12. The tract at residues Leu256–Glu394 is coil 2. Residues Glu395 to Ser465 form a tail region.

Belongs to the intermediate filament family. As to quaternary structure, heterotetramer of two type I and two type II keratins. In terms of tissue distribution, strongly expressed in skin and scalp, and weak expression observed in thymus and tongue. In the hair follicle, expression is restricted to the mid- to upper inner root sheath cuticle, being present slightly above the apex of the dermal papilla (at protein level).

The sequence is that of Keratin, type I cytoskeletal 26 from Homo sapiens (Human).